Here is a 418-residue protein sequence, read N- to C-terminus: uncharacterized protein (418 aa).

This is an uncharacterized protein from Escherichia coli (strain K12).